Reading from the N-terminus, the 1053-residue chain is Protein CLEC16A (1053 aa).

Positions 51-198 (IRSITEILIW…AVRTITLNVY (148 aa)) constitute an FPL domain. Disordered regions lie at residues 375-434 (SLEM…GESE), 452-471 (STSV…AATC), and 892-983 (SSPS…SPSL). Basic residues predominate over residues 381–392 (HKGKRRVQKRPN). The span at 892 to 938 (SSPSLSSQSPPSASGSPSGSGSTSHCDSGGTSSSSTPSTAQSPADAP) shows a compositional bias: low complexity.

The protein belongs to the CLEC16A/gop-1 family. In terms of assembly, interacts with RNF41/NRDP1. In terms of tissue distribution, almost exclusively expressed in immune cells, including dendritic cells, B-lymphocytes and natural killer cells.

It is found in the endosome membrane. The protein localises to the lysosome membrane. Functionally, regulator of mitophagy through the upstream regulation of the RNF41/NRDP1-PRKN pathway. Mitophagy is a selective form of autophagy necessary for mitochondrial quality control. The RNF41/NRDP1-PRKN pathway regulates autophagosome-lysosome fusion during late mitophagy. May protect RNF41/NRDP1 from proteasomal degradation, RNF41/NRDP1 which regulates proteasomal degradation of PRKN. Plays a key role in beta cells functions by regulating mitophagy/autophagy and mitochondrial health. The chain is Protein CLEC16A from Homo sapiens (Human).